The chain runs to 423 residues: Ferrochelatase, mitochondrial (423 aa).

A mitochondrion-targeting transit peptide spans 1–54; the sequence is MRSLGANMAAALRAAGVLLRDPLVSSSWRVYQPWRWKSVAAAAAATTETAQHAQ. Lys-57 carries the N6-acetyllysine modification. Positions 115, 123, and 130 each coordinate protoporphyrin IX. Lys-138 is subject to N6-succinyllysine. Cys-196 lines the [2Fe-2S] cluster pocket. Active-site residues include His-230 and Asp-383. [2Fe-2S] cluster-binding residues include Cys-403, Cys-406, and Cys-411. Lys-415 is modified (N6-acetyllysine; alternate). Lys-415 bears the N6-succinyllysine; alternate mark.

It belongs to the ferrochelatase family. Homodimer. Homotetramer. Interaction with PGRMC1; the interaction results in decreased FECH activity. Interacts with ABCB10 and SLC25A37; this interaction forms an oligomeric complex. Forms a complex with ABCB7 and ABCB10, where a dimeric FECH bridges ABCB7 and ABCB10 homodimers; this complex may be required for cellular iron homeostasis, mitochondrial function and heme biosynthesis. Interacts with ABCB7 and ABCB10. It depends on [2Fe-2S] cluster as a cofactor.

The protein resides in the mitochondrion inner membrane. It carries out the reaction heme b + 2 H(+) = protoporphyrin IX + Fe(2+). The protein operates within porphyrin-containing compound metabolism; protoheme biosynthesis; protoheme from protoporphyrin-IX: step 1/1. Its function is as follows. Catalyzes the ferrous insertion into protoporphyrin IX and participates in the terminal step in the heme biosynthetic pathway. This chain is Ferrochelatase, mitochondrial, found in Pan troglodytes (Chimpanzee).